Here is a 289-residue protein sequence, read N- to C-terminus: SNF1-related protein kinase regulatory subunit beta-2 (289 aa).

Over residues 1–10 (MGNVNAREEA) the composition is skewed to basic and acidic residues. The tract at residues 1 to 59 (MGNVNAREEANSNNASAVEDEDAEICSREAMSAASDGNHVAPPELMGQSPPHSPRATQS) is disordered. Residue G2 is the site of N-myristoyl glycine attachment. The segment at 103-180 (PTMITWCHGG…AGNTFNILDL (78 aa)) is kinase-interacting sequence (KIS). The tract at residues 217–289 (EPPVVPPHLQ…TVVLYKSLQR (73 aa)) is association with SNF1 complex (ASC).

It belongs to the 5'-AMP-activated protein kinase beta subunit family. Subunit of a probable heterotrimeric complex consisting of an alpha catalytic (KIN10 or KIN11) subunit, and a beta (KINB) and a gamma (KING or SNF4) non-catalytic regulatory subunits. Interacts with SNF4. Interacts with FLZ1, FLZ2, FLZ8, FLZ9, FLZ10, FLZ12, FLZ13 and FLZ14. Sumoylated. As to expression, expressed in leaves, stems, roots, flower buds and flowers. Not detectable in siliques.

The protein localises to the cell membrane. Regulatory subunit of the probable trimeric SNF1-related protein kinase (SnRK) complex, which may play a role in a signal transduction cascade regulating gene expression and carbohydrate metabolism in higher plants. The SnRK complex may also be involved in the regulation of fatty acid synthesis by phosphorylation of acetyl-CoA carboxylase and in assimilation of nitrogen by phosphorylating nitrate reductase. In Arabidopsis thaliana (Mouse-ear cress), this protein is SNF1-related protein kinase regulatory subunit beta-2 (KINB2).